Consider the following 421-residue polypeptide: UV-B-induced protein At3g17800, chloroplastic (421 aa).

Disordered stretches follow at residues 1 to 40 (MDALTSSLVRSPIVPSRTSDNGSGSMFLTASGPGFTRSGS) and 74 to 95 (VRASSASNDASSGSSPKPIAPL). A chloroplast-targeting transit peptide spans 1 to 75 (MDALTSSLVR…AKTRRSFVVR (75 aa)). The span at 16–28 (SRTSDNGSGSMFL) shows a compositional bias: polar residues. Low complexity predominate over residues 74–88 (VRASSASNDASSGSS).

It is found in the plastid. Its subcellular location is the chloroplast. In Arabidopsis thaliana (Mouse-ear cress), this protein is UV-B-induced protein At3g17800, chloroplastic.